Here is a 692-residue protein sequence, read N- to C-terminus: Elongation factor G (692 aa).

Residues 8 to 282 (AKTRNIGIMA…AVIAYLPSPL (275 aa)) enclose the tr-type G domain. GTP contacts are provided by residues 17–24 (AHVDAGKT), 81–85 (DTPGH), and 135–138 (NKMD).

It belongs to the TRAFAC class translation factor GTPase superfamily. Classic translation factor GTPase family. EF-G/EF-2 subfamily.

It localises to the cytoplasm. Its function is as follows. Catalyzes the GTP-dependent ribosomal translocation step during translation elongation. During this step, the ribosome changes from the pre-translocational (PRE) to the post-translocational (POST) state as the newly formed A-site-bound peptidyl-tRNA and P-site-bound deacylated tRNA move to the P and E sites, respectively. Catalyzes the coordinated movement of the two tRNA molecules, the mRNA and conformational changes in the ribosome. This chain is Elongation factor G (fus), found in Streptococcus pyogenes serotype M1.